We begin with the raw amino-acid sequence, 756 residues long: Polyribonucleotide nucleotidyltransferase (756 aa).

Mg(2+) is bound by residues D547 and D553. One can recognise a KH domain in the interval 613–672; sequence PRITSVTIPVNKIGELIGPKGKTINAITEETGADVSIEEDGTVYISAATGEAADAAIDRV. Residues 684–753 form the S1 motif domain; that stretch reads GERFLGTVVK…NRGKISLVPV (70 aa).

Belongs to the polyribonucleotide nucleotidyltransferase family. Requires Mg(2+) as cofactor.

Its subcellular location is the cytoplasm. The enzyme catalyses RNA(n+1) + phosphate = RNA(n) + a ribonucleoside 5'-diphosphate. Functionally, involved in mRNA degradation. Catalyzes the phosphorolysis of single-stranded polyribonucleotides processively in the 3'- to 5'-direction. The chain is Polyribonucleotide nucleotidyltransferase from Corynebacterium aurimucosum (strain ATCC 700975 / DSM 44827 / CIP 107346 / CN-1) (Corynebacterium nigricans).